The following is a 243-amino-acid chain: Type II restriction enzyme NlaIV (243 aa).

The enzyme catalyses Endonucleolytic cleavage of DNA to give specific double-stranded fragments with terminal 5'-phosphates.. A P subtype restriction enzyme that recognizes the double-stranded sequence 5'-GGNNCC-3' and cleaves after N-3. This Neisseria lactamica protein is Type II restriction enzyme NlaIV (nlaIVR).